The following is a 158-amino-acid chain: Large ribosomal subunit protein mL50 (158 aa).

The protein belongs to the mitochondrion-specific ribosomal protein mL50 family. As to quaternary structure, component of the mitochondrial large ribosomal subunit (mt-LSU). Mature mammalian 55S mitochondrial ribosomes consist of a small (28S) and a large (39S) subunit. The 28S small subunit contains a 12S ribosomal RNA (12S mt-rRNA) and 30 different proteins. The 39S large subunit contains a 16S rRNA (16S mt-rRNA), a copy of mitochondrial valine transfer RNA (mt-tRNA(Val)), which plays an integral structural role, and 52 different proteins.

The protein resides in the mitochondrion. This chain is Large ribosomal subunit protein mL50 (MRPL50), found in Homo sapiens (Human).